A 620-amino-acid polypeptide reads, in one-letter code: Glutathione-regulated potassium-efflux system protein KefC (620 aa).

12 consecutive transmembrane segments (helical) span residues 4–24 (HTLL…PIAV), 26–46 (LGLG…PWGL), 54–74 (SILH…GLEL), 90–110 (GALQ…FLGL), 114–134 (VAEL…MQAM), 149–169 (FAVL…IPLL), 178–198 (LGAF…VVLL), 218–238 (VFSA…EEVG), 270–290 (GLLL…GTLV), 294–314 (LRIL…LWLV), 327–347 (WFAV…GAAQ), and 359–379 (ALTL…VLLT). An RCK N-terminal domain is found at 399–518 (QPRVIVAGFG…AGVAMPERET (120 aa)). Residues 599-620 (QGTAEGKHSGEAADEPEVKPSI) are disordered.

This sequence belongs to the monovalent cation:proton antiporter 2 (CPA2) transporter (TC 2.A.37) family. KefC subfamily. As to quaternary structure, homodimer. Interacts with the regulatory subunit KefF.

The protein resides in the cell inner membrane. In terms of biological role, pore-forming subunit of a potassium efflux system that confers protection against electrophiles. Catalyzes K(+)/H(+) antiport. The chain is Glutathione-regulated potassium-efflux system protein KefC from Salmonella dublin (strain CT_02021853).